The following is a 637-amino-acid chain: Anthranilate synthase, phenazine specific (637 aa).

Residues 1 to 434 (MSQAAARLME…QRQQTQSDFS (434 aa)) are anthranilate synthase component I. The Glutamine amidotransferase type-1 domain maps to 437–628 (QVLIVDAEDT…LRHALIHTPV (192 aa)). Active-site for GATase activity residues include Cys-517, His-602, and Glu-604.

It catalyses the reaction chorismate + L-glutamine = anthranilate + pyruvate + L-glutamate + H(+). Its pathway is antibiotic biosynthesis; phenazine biosynthesis. Its function is as follows. Involved in the biosynthesis of the antibiotic, phenazine, a nitrogen-containing heterocyclic molecule having important roles in virulence, competition and biological control. In Pseudomonas fluorescens, this protein is Anthranilate synthase, phenazine specific (phzE).